Reading from the N-terminus, the 446-residue chain is D(1A) dopamine receptor (446 aa).

At 1–23 the chain is on the extracellular side; that stretch reads MRTLNTSTMDGTGLVVERDFSFR. N-linked (GlcNAc...) asparagine glycosylation is present at asparagine 5. A helical transmembrane segment spans residues 24–49; it reads ILTACFLSLLILSTLLGNTLVCAAVI. The Cytoplasmic portion of the chain corresponds to 50–60; that stretch reads RFRHLRSKVTN. A helical membrane pass occupies residues 61 to 87; sequence FFVISLAVSDLLVAVLVMPWKAVAEIA. Residues 88 to 96 lie on the Extracellular side of the membrane; it reads GFWPFGSFC. A disulfide bond links cysteine 96 and cysteine 186. The helical transmembrane segment at 97–119 threads the bilayer; sequence NIWVAFDIMCSTASILNLCVISV. Topologically, residues 120–138 are cytoplasmic; it reads DRYWAISSPFRYERKMTPK. The helical transmembrane segment at 139–163 threads the bilayer; the sequence is AAFILISVAWTLSVLISFIPVQLSW. Topologically, residues 164 to 192 are extracellular; the sequence is HKAKPTSPSDGNVTSLGKTTHNCDSSLSR. The chain crosses the membrane as a helical span at residues 193-218; sequence TYAISSSLISFYIPVAIMIVTYTRIY. Over 219–272 the chain is Cytoplasmic; sequence RIAQKQIRRISALERAAVHAKNCQTTAGNGNPAECSQPESSFKMSFKRETKVLK. A helical membrane pass occupies residues 273–299; that stretch reads TLSVIMGVFVCCWLPFFILNCMVPFCG. The Extracellular segment spans residues 300-312; it reads SGETKPFCIDSIT. Residues 313–337 traverse the membrane as a helical segment; the sequence is FDVFVWFGWANSSLNPIIYAFNADF. The Cytoplasmic segment spans residues 338–446; sequence RKAFSTLLGC…PITQNGQHPT (109 aa). S-palmitoyl cysteine attachment occurs at residues cysteine 347 and cysteine 351.

The protein belongs to the G-protein coupled receptor 1 family. Interacts with DNAJC14 via its C-terminus. Interacts with DRD2. Interacts with DORIP1.

The protein localises to the cell membrane. It localises to the endoplasmic reticulum membrane. It is found in the cell projection. The protein resides in the cilium membrane. Its subcellular location is the dendrite. The protein localises to the dendritic spine. In terms of biological role, dopamine receptor whose activity is mediated by G proteins which activate adenylyl cyclase. This is D(1A) dopamine receptor (DRD1) from Sus scrofa (Pig).